We begin with the raw amino-acid sequence, 379 residues long: Reducing end xylose-releasing exo-oligoxylanase (379 aa).

The active-site Proton donor is the Glu66. Residue Asp259 is the Proton acceptor of the active site.

It belongs to the glycosyl hydrolase 8 (cellulase D) family.

It carries out the reaction Hydrolysis of (1-&gt;4)-beta-D-xylose residues from the reducing end of oligosaccharides.. In terms of biological role, hydrolyzes xylooligosaccharides with a degree of polymerization of greater than or equal to 3, releasing xylose from the reducing end. Has low activity on birchwood xylan, oat spelt xylan and arabinoxylan. This chain is Reducing end xylose-releasing exo-oligoxylanase, found in Bifidobacterium adolescentis (strain ATCC 15703 / DSM 20083 / NCTC 11814 / E194a).